A 306-amino-acid polypeptide reads, in one-letter code: Homoserine kinase (306 aa).

91–101 serves as a coordination point for ATP; that stretch reads PLARGLGSSAT.

Belongs to the GHMP kinase family. Homoserine kinase subfamily.

It localises to the cytoplasm. The enzyme catalyses L-homoserine + ATP = O-phospho-L-homoserine + ADP + H(+). Its pathway is amino-acid biosynthesis; L-threonine biosynthesis; L-threonine from L-aspartate: step 4/5. In terms of biological role, catalyzes the ATP-dependent phosphorylation of L-homoserine to L-homoserine phosphate. The protein is Homoserine kinase of Synechocystis sp. (strain ATCC 27184 / PCC 6803 / Kazusa).